Consider the following 405-residue polypeptide: Sarcosine oxidase subunit beta (405 aa).

Positions 31, 32, 53, 61, 62, 66, and 68 each coordinate FAD. Tele-8alpha-FMN histidine is present on H173. Positions 197, 354, 357, and 359 each coordinate FAD.

Belongs to the SoxB family. Heterotetramer composed of subunits alpha (SoxA), beta (SoxB), gamma (SoxG) and delta (SoxD). The cofactor is FAD. FMN is required as a cofactor.

The protein resides in the cytoplasm. The catalysed reaction is sarcosine + (6S)-5,6,7,8-tetrahydrofolate + O2 = (6R)-5,10-methylene-5,6,7,8-tetrahydrofolate + glycine + H2O2. It catalyses the reaction sarcosine + O2 + H2O = formaldehyde + glycine + H2O2. Its function is as follows. In the presence of tetrahydrofolate, catalyzes the oxidative demethylation of sarcosine to yield glycine, 5,10-methylenetetrahydrofolate and hydrogen peroxide. In the absence of tetrahydrofolate, catalyzes the oxidative demethylation of sarcosine to yield glycine, formaldehyde and hydrogen peroxide. This chain is Sarcosine oxidase subunit beta (soxB), found in Arthrobacter sp.